Here is a 212-residue protein sequence, read N- to C-terminus: Probable nicotinate-nucleotide adenylyltransferase (212 aa).

The protein belongs to the NadD family.

The enzyme catalyses nicotinate beta-D-ribonucleotide + ATP + H(+) = deamido-NAD(+) + diphosphate. Its pathway is cofactor biosynthesis; NAD(+) biosynthesis; deamido-NAD(+) from nicotinate D-ribonucleotide: step 1/1. Catalyzes the reversible adenylation of nicotinate mononucleotide (NaMN) to nicotinic acid adenine dinucleotide (NaAD). The sequence is that of Probable nicotinate-nucleotide adenylyltransferase from Shewanella sp. (strain MR-4).